The primary structure comprises 87 residues: NADH dehydrogenase [ubiquinone] 1 alpha subcomplex subunit 4-like 2 (87 aa).

It belongs to the complex I NDUFA4 subunit family.

The chain is NADH dehydrogenase [ubiquinone] 1 alpha subcomplex subunit 4-like 2 (NDUFA4L2) from Bos taurus (Bovine).